A 467-amino-acid chain; its full sequence is Trigger factor (467 aa).

Residues 174 to 261 enclose the PPIase FKBP-type domain; it reads SDIAILTFKG…LQDLKTRELP (88 aa). Positions 439 to 467 are disordered; sequence PKKALNEKVKSSKPKNTQKKTDKTKKDSP. The span at 457–467 shows a compositional bias: basic and acidic residues; it reads KKTDKTKKDSP.

This sequence belongs to the FKBP-type PPIase family. Tig subfamily.

The protein localises to the cytoplasm. The enzyme catalyses [protein]-peptidylproline (omega=180) = [protein]-peptidylproline (omega=0). Involved in protein export. Acts as a chaperone by maintaining the newly synthesized protein in an open conformation. Functions as a peptidyl-prolyl cis-trans isomerase. This is Trigger factor from Prochlorococcus marinus (strain SARG / CCMP1375 / SS120).